Reading from the N-terminus, the 371-residue chain is RxLR effector protein PITG_12731 (371 aa).

Residues 1-24 (MRFYSVLLTIVTLIASTYDAKVNA) form the signal peptide. The short motif at 43–53 (RMLRADHADER) is the RxLR-dEER element.

This sequence belongs to the RxLR effector family.

The protein localises to the secreted. Its subcellular location is the host nucleus. It localises to the host cytoplasm. In terms of biological role, effector that enhances P.infestans colonization of Nicotiana benthamiana leaves. This Phytophthora infestans (strain T30-4) (Potato late blight agent) protein is RxLR effector protein PITG_12731.